A 235-amino-acid chain; its full sequence is Uridylate kinase (235 aa).

9 to 12 (KLSG) provides a ligand contact to ATP. The tract at residues 17 to 22 (GDQGYG) is involved in allosteric activation by GTP. Gly51 contacts UMP. 2 residues coordinate ATP: Gly52 and Arg56. UMP contacts are provided by residues Asp71 and 132-139 (CGNPFFTT). Positions 159, 165, and 168 each coordinate ATP.

This sequence belongs to the UMP kinase family. In terms of assembly, homohexamer.

It is found in the cytoplasm. It catalyses the reaction UMP + ATP = UDP + ADP. It functions in the pathway pyrimidine metabolism; CTP biosynthesis via de novo pathway; UDP from UMP (UMPK route): step 1/1. Allosterically activated by GTP. Inhibited by UTP. Functionally, catalyzes the reversible phosphorylation of UMP to UDP. The polypeptide is Uridylate kinase (Synechococcus sp. (strain WH7803)).